Reading from the N-terminus, the 181-residue chain is Der GTPase-activating protein YihI (181 aa).

A disordered region spans residues 1–73 (MSRIKKARKP…DPRIGSKKPI (73 aa)). Residues 22–32 (NRTDRDVESRE) show a composition bias toward basic and acidic residues. Residues 33–42 (IKRKRKRKGL) are compositionally biased toward basic residues. The segment covering 55–67 (QARRNAQKKDPRI) has biased composition (basic and acidic residues).

It belongs to the YihI family. In terms of assembly, interacts with Der.

Functionally, a GTPase-activating protein (GAP) that modifies Der/EngA GTPase function. May play a role in ribosome biogenesis. The chain is Der GTPase-activating protein YihI from Aliivibrio fischeri (strain ATCC 700601 / ES114) (Vibrio fischeri).